Reading from the N-terminus, the 649-residue chain is Thioredoxin reductase 1, cytoplasmic (649 aa).

The residue at position 1 (Met-1) is an N-acetylmethionine. Residues 1–49 (MGCAEGKAVAAAAPTELQTKGKNGDGRRRSAKDHHPGKTLPENPAGFTS) form a disordered region. A compositionally biased stretch (basic and acidic residues) spans 22–36 (KNGDGRRRSAKDHHP). In terms of domain architecture, Glutaredoxin spans 56 to 156 (RALLQAYIDG…KLLKMNGPED (101 aa)). The interval 145–149 (LQKLL) is required for interaction with ESR1 and ESR2. FAD-binding positions include 172-173 (SG), 192-193 (DF), 208-209 (TC), and 213-217 (GCIPK). Cys-209 and Cys-214 are oxidised to a cystine. At Lys-218 the chain carries N6-succinyllysine. Tyr-281 is modified (phosphotyrosine). Residues 281–282 (YG) and Thr-311 each bind FAD. NADP(+) is bound by residues Arg-316, 348–354 (ASYVALE), 371–372 (RS), Arg-376, 376–378 (RGF), 442–443 (GR), and Lys-465. An FAD-binding site is contributed by Tyr-350. FAD is bound by residues Asp-484, 491-493 (ELT), and His-622. Glu-491 contacts NADP(+). Catalysis depends on His-622, which acts as the Proton acceptor. Positions 647–648 (CU) form a cross-link, cysteinyl-selenocysteine (Cys-Sec). Residue Sec-648 is a non-standard amino acid, selenocysteine.

This sequence belongs to the class-I pyridine nucleotide-disulfide oxidoreductase family. As to quaternary structure, homodimer. Interacts with HERC5. Interacts with ESR1 and ESR2. FAD serves as cofactor. In terms of processing, the N-terminus is blocked. Post-translationally, ISGylated. As to expression, expressed predominantly in Leydig cells (at protein level). Also expressed in ovary, spleen, heart, liver, kidney and pancreas and in a number of cancer cell lines. In terms of tissue distribution, widely expressed with highest levels in kidney, testis, uterus, ovary, prostate, placenta and fetal liver.

It localises to the cytoplasm. The protein resides in the nucleus. The catalysed reaction is [thioredoxin]-dithiol + NADP(+) = [thioredoxin]-disulfide + NADPH + H(+). It carries out the reaction H2O2 + NADPH + H(+) = NADP(+) + 2 H2O. In terms of biological role, reduces disulfideprotein thioredoxin (Trx) to its dithiol-containing form. Homodimeric flavoprotein involved in the regulation of cellular redox reactions, growth and differentiation. Contains a selenocysteine residue at the C-terminal active site that is essential for catalysis. Also has reductase activity on hydrogen peroxide (H2O2). Induces actin and tubulin polymerization, leading to formation of cell membrane protrusions. Its function is as follows. Enhances the transcriptional activity of estrogen receptors ESR1 and ESR2. Functionally, enhances the transcriptional activity of the estrogen receptor ESR2 only. Mediates cell death induced by a combination of interferon-beta and retinoic acid. The sequence is that of Thioredoxin reductase 1, cytoplasmic from Homo sapiens (Human).